We begin with the raw amino-acid sequence, 126 residues long: Probable V-type proton ATPase subunit G (126 aa).

Belongs to the V-ATPase G subunit family. In terms of assembly, V-ATPase is a heteromultimeric enzyme made up of two complexes: the ATP-hydrolytic V1 complex and the proton translocation V0 complex. The V1 complex consists of three catalytic AB heterodimers that form a heterohexamer, three peripheral stalks each consisting of EG heterodimers, one central rotor including subunits D and F, and the regulatory subunits C and H. The proton translocation complex V0 consists of the proton transport subunit a, a ring of proteolipid subunits c9c'', rotary subunit d, subunits e and f, and the accessory subunits vah-19/Ac45 and vah-20/PRR. Interacts with ced-1.

Its function is as follows. Subunit of the V1 complex of vacuolar(H+)-ATPase (V-ATPase), a multisubunit enzyme composed of a peripheral complex (V1) that hydrolyzes ATP and a membrane integral complex (V0) that translocates protons. V-ATPase is responsible for acidifying and maintaining the pH of intracellular compartments and in some cell types, is targeted to the plasma membrane, where it is responsible for acidifying the extracellular environment. In neurons, required for necrotic cell death by promoting intracellular acidification. The polypeptide is Probable V-type proton ATPase subunit G (Caenorhabditis elegans).